A 160-amino-acid polypeptide reads, in one-letter code: Sec-independent protein translocase protein TatB (160 aa).

A helical membrane pass occupies residues 1 to 21; the sequence is MFGMGFFEILVVLIVAIIFLG. A disordered region spans residues 118 to 160; sequence HLNEEVSNEEALNKEVSSDESPKEVQLTTDNNAKEHDKEKEHV. Composition is skewed to basic and acidic residues over residues 128 to 140 and 149 to 160; these read ALNKEVSSDESPK and NAKEHDKEKEHV.

It belongs to the TatB family. In terms of assembly, the Tat system comprises two distinct complexes: a TatABC complex, containing multiple copies of TatA, TatB and TatC subunits, and a separate TatA complex, containing only TatA subunits. Substrates initially bind to the TatABC complex, which probably triggers association of the separate TatA complex to form the active translocon.

The protein localises to the cell inner membrane. Its function is as follows. Part of the twin-arginine translocation (Tat) system that transports large folded proteins containing a characteristic twin-arginine motif in their signal peptide across membranes. Together with TatC, TatB is part of a receptor directly interacting with Tat signal peptides. TatB may form an oligomeric binding site that transiently accommodates folded Tat precursor proteins before their translocation. In Helicobacter pylori (strain J99 / ATCC 700824) (Campylobacter pylori J99), this protein is Sec-independent protein translocase protein TatB.